We begin with the raw amino-acid sequence, 328 residues long: GMP reductase (328 aa).

Cysteine 177 serves as the catalytic Thioimidate intermediate. Residue 206-229 (IVADGGIRYNGDIAKSIRFGASMV) coordinates NADP(+).

This sequence belongs to the IMPDH/GMPR family. GuaC type 2 subfamily.

The enzyme catalyses IMP + NH4(+) + NADP(+) = GMP + NADPH + 2 H(+). Catalyzes the irreversible NADPH-dependent deamination of GMP to IMP. It functions in the conversion of nucleobase, nucleoside and nucleotide derivatives of G to A nucleotides, and in maintaining the intracellular balance of A and G nucleotides. The polypeptide is GMP reductase (Levilactobacillus brevis (strain ATCC 367 / BCRC 12310 / CIP 105137 / JCM 1170 / LMG 11437 / NCIMB 947 / NCTC 947) (Lactobacillus brevis)).